Reading from the N-terminus, the 1121-residue chain is Cilia- and flagella-associated protein 70 (1121 aa).

Residues 410–428 (NLKEDKPVKEKDIDGRPRP) show a composition bias toward basic and acidic residues. The disordered stretch occupies residues 410 to 457 (NLKEDKPVKEKDIDGRPRPGDVQAPSIKSQSSDTPLEGEPPLSHNPEG). 3 TPR repeats span residues 635-668 (SEQL…EPQN), 669-702 (LDHW…NQSH), and 704-736 (HSLL…EPTN). Disordered stretches follow at residues 778-802 (KQKS…PWGI) and 836-858 (QSDS…QKPS). TPR repeat units lie at residues 929–962 (CEYY…DYLN), 963–996 (PNVW…VVDA), 1000–1033 (HFIF…SPSC), 1035–1066 (TWLG…NNYN), and 1068–1100 (EVWA…KLKD).

This sequence belongs to the CFAP70 family. Expressed in testis.

The protein resides in the cell projection. It is found in the cilium. It localises to the flagellum. Its subcellular location is the cytoplasm. The protein localises to the cytoskeleton. The protein resides in the flagellum basal body. It is found in the cilium axoneme. In terms of biological role, axoneme-binding protein that plays a role in the regulation of ciliary motility and cilium length. This is Cilia- and flagella-associated protein 70 from Homo sapiens (Human).